A 437-amino-acid polypeptide reads, in one-letter code: Enolase (437 aa).

Position 166 (Gln166) interacts with (2R)-2-phosphoglycerate. The active-site Proton donor is the Glu208. 3 residues coordinate Mg(2+): Asp245, Glu295, and Asp322. The (2R)-2-phosphoglycerate site is built by Lys347, Arg376, Ser377, and Lys398. Lys347 (proton acceptor) is an active-site residue.

Belongs to the enolase family. Mg(2+) is required as a cofactor.

It is found in the cytoplasm. The protein localises to the secreted. The protein resides in the cell surface. It carries out the reaction (2R)-2-phosphoglycerate = phosphoenolpyruvate + H2O. It functions in the pathway carbohydrate degradation; glycolysis; pyruvate from D-glyceraldehyde 3-phosphate: step 4/5. Its function is as follows. Catalyzes the reversible conversion of 2-phosphoglycerate (2-PG) into phosphoenolpyruvate (PEP). It is essential for the degradation of carbohydrates via glycolysis. The polypeptide is Enolase (Lachnoclostridium phytofermentans (strain ATCC 700394 / DSM 18823 / ISDg) (Clostridium phytofermentans)).